Reading from the N-terminus, the 515-residue chain is GMP synthase [glutamine-hydrolyzing] (515 aa).

The 191-residue stretch at 10–200 folds into the Glutamine amidotransferase type-1 domain; sequence TIIVLDFGSQ…VFGVCGCSEG (191 aa). The Nucleophile role is filled by C87. Active-site residues include H174 and E176. Residues 201–390 enclose the GMPS ATP-PPase domain; that stretch reads WNMENFIEVE…LGIPDEIVWR (190 aa). Position 228-234 (228-234) interacts with ATP; sequence SGGVDSS.

As to quaternary structure, homodimer.

The enzyme catalyses XMP + L-glutamine + ATP + H2O = GMP + L-glutamate + AMP + diphosphate + 2 H(+). It functions in the pathway purine metabolism; GMP biosynthesis; GMP from XMP (L-Gln route): step 1/1. In terms of biological role, catalyzes the synthesis of GMP from XMP. The chain is GMP synthase [glutamine-hydrolyzing] from Bacillus thuringiensis subsp. konkukian (strain 97-27).